The following is a 118-amino-acid chain: MICOS complex subunit MIC13 (118 aa).

Over 1-7 the chain is Mitochondrial matrix; it reads MVPRVWS. A helical membrane pass occupies residues 8 to 26; that stretch reads LMRFLIKGSVAGGAIYLVY. Residues 27-118 are Mitochondrial intermembrane-facing; sequence DQDPLGPSDK…GWEYLKERTK (92 aa).

This sequence belongs to the MICOS complex subunit Mic13 family. Component of the mitochondrial contact site and cristae organizing system (MICOS) complex, composed of at least MICOS10/MIC10, CHCHD3/MIC19, CHCHD6/MIC25, APOO/MIC26, MICOS13/MIC13, APOOL/MIC27 and IMMT/MIC60. The MICOS complex associates with mitochondrial outer membrane proteins SAMM50, MTX1 and MTX2 (together described as components of the mitochondrial outer membrane sorting assembly machinery (SAM) complex) and DNAJC11, mitochondrial inner membrane protein TMEM11 and with HSPA9. The MICOS and SAM complexes together with DNAJC11 are part of a large protein complex spanning both membranes termed the mitochondrial intermembrane space bridging (MIB) complex.

Its subcellular location is the mitochondrion inner membrane. Component of the MICOS complex, a large protein complex of the mitochondrial inner membrane that plays crucial roles in the maintenance of crista junctions, inner membrane architecture, and formation of contact sites to the outer membrane. Constituent of mature MICOS complex, it is required for the formation of cristae junction (CJ) and maintenance of cristae morphology. Required for the incorporation of MICOS10/MIC10 into the MICOS complex. This is MICOS complex subunit MIC13 from Sus scrofa (Pig).